Here is a 563-residue protein sequence, read N- to C-terminus: MAPRYHSAAEADTGVCGETKSRDSDALYDLPLRDPEEDQTTVALHPGSGEERFPVFQSEFTSVPVSDGGANGVTYPVGGSRKEQDEISSRGPPAYSLEIRGKTSEQLAESGADDEGTNGEKQSLLVPCLAVFSSNYNFTVTSIALFLMNQDPLYKDASDTVVGSSTVKMLSYAGAIVGMCTMGYLGDLIGRRLAMILTLALVFIGALLSSICAWGDGVTVLVIMGVCRFVLGVGSGGVYPLSAVSAAEGAGSEKSNDRSMRVSWAYSMNVPGIMFPYIVALVLWCTTHNVDVCFRILLGFGALPALLIWLPAWRMKEDRAYVAKDFAKHLAGVFVSRSYWRQLLGTGVCWLLYDVTAYGILLVQPEITQSIWGNSSSVTDVIWQNIILNGMGIPGCFMGILVLKQMGVKWLQFWGFVGLAVSAFLMAATVEILQGKAWAQLVLLCIVNFFINWGASITTFILPSLVFPPEVRSTYSGISAALGKIGAVGGIYTMKAILSTGGLTPMMICAGVPSLAAAILTWFYVDPVPNTLRSSFLQCFGSLAGSCPFIDCRKFRRGSRAFE.

Disordered stretches follow at residues 1 to 51 (MAPR…SGEE) and 67 to 96 (DGGA…PAYS). The Extracellular segment spans residues 1 to 127 (MAPRYHSAAE…NGEKQSLLVP (127 aa)). A helical membrane pass occupies residues 128–148 (CLAVFSSNYNFTVTSIALFLM). At 149–168 (NQDPLYKDASDTVVGSSTVK) the chain is on the cytoplasmic side. Residues 169–189 (MLSYAGAIVGMCTMGYLGDLI) form a helical membrane-spanning segment. The Extracellular segment spans residues 190–192 (GRR). Residues 193–213 (LAMILTLALVFIGALLSSICA) traverse the membrane as a helical segment. Residues 214 to 217 (WGDG) lie on the Cytoplasmic side of the membrane. The helical transmembrane segment at 218-238 (VTVLVIMGVCRFVLGVGSGGV) threads the bilayer. Over 239-263 (YPLSAVSAAEGAGSEKSNDRSMRVS) the chain is Extracellular. The chain crosses the membrane as a helical span at residues 264-284 (WAYSMNVPGIMFPYIVALVLW). Over 285–291 (CTTHNVD) the chain is Cytoplasmic. Residues 292–312 (VCFRILLGFGALPALLIWLPA) form a helical membrane-spanning segment. Residues 313 to 342 (WRMKEDRAYVAKDFAKHLAGVFVSRSYWRQ) lie on the Extracellular side of the membrane. The chain crosses the membrane as a helical span at residues 343–363 (LLGTGVCWLLYDVTAYGILLV). Over 364–380 (QPEITQSIWGNSSSVTD) the chain is Cytoplasmic. A helical membrane pass occupies residues 381-401 (VIWQNIILNGMGIPGCFMGIL). The Extracellular segment spans residues 402–412 (VLKQMGVKWLQ). The chain crosses the membrane as a helical span at residues 413-433 (FWGFVGLAVSAFLMAATVEIL). The Cytoplasmic portion of the chain corresponds to 434–440 (QGKAWAQ). Residues 441-461 (LVLLCIVNFFINWGASITTFI) traverse the membrane as a helical segment. At 462-477 (LPSLVFPPEVRSTYSG) the chain is on the extracellular side. The helical transmembrane segment at 478–498 (ISAALGKIGAVGGIYTMKAIL) threads the bilayer. At 499-504 (STGGLT) the chain is on the cytoplasmic side. The chain crosses the membrane as a helical span at residues 505 to 525 (PMMICAGVPSLAAAILTWFYV). Over 526–563 (DPVPNTLRSSFLQCFGSLAGSCPFIDCRKFRRGSRAFE) the chain is Extracellular.

Belongs to the major facilitator superfamily. Phosphate:H(+) symporter (TC 2.A.1.9) family.

It localises to the cell membrane. The enzyme catalyses phosphate(in) = phosphate(out). In terms of biological role, inorganic phosphate transporter. Activity is likely sodium-independent. Exhibits higher activity under acidic pH, implying that either the monovalent form of phosphate is the preferred substrate or the transport activity is H(+)-dependent. The protein is Inorganic phosphate transporter PT2 of Toxoplasma gondii (strain ATCC 50861 / VEG).